Consider the following 58-residue polypeptide: Cyclotide trypsin inhibitor TopI1 (58 aa).

A signal peptide spans 1 to 23 (MKFIIVLLLLTALTLTSIPVIEG). The cyclopeptide (Ile-Lys) cross-link spans 24–55 (ILKRCKTYDDCKDVCKARKGKCEFGICKCMIK). Cystine bridges form between C28-C45, C34-C50, and C38-C52. S56 carries the serine amide modification.

In terms of processing, this is a cyclic peptide. In terms of tissue distribution, expressed by the venom gland.

It localises to the secreted. Functionally, first cyclic scorpion trypsin inhibitor (Kd~0.5 nM). Does not inhibit chymotrypsin. The protein is Cyclotide trypsin inhibitor TopI1 of Tityus obscurus (Amazonian scorpion).